The primary structure comprises 404 residues: Phospho-N-acetylmuramoyl-pentapeptide-transferase (404 aa).

10 helical membrane passes run 30-50 (SAAI…IIFF), 73-93 (IPTM…LLFA), 100-120 (IMLL…DDYI), 132-152 (GKFK…TLIF), 209-229 (YMWI…SNGA), 242-262 (TSAI…NVIF), 274-294 (LAEL…FLWY), 301-321 (IFMG…LAIV), 326-346 (LMIP…IIQV), and 381-401 (KIVT…LVTL).

This sequence belongs to the glycosyltransferase 4 family. MraY subfamily. The cofactor is Mg(2+).

It is found in the cell inner membrane. The enzyme catalyses UDP-N-acetyl-alpha-D-muramoyl-L-alanyl-gamma-D-glutamyl-meso-2,6-diaminopimeloyl-D-alanyl-D-alanine + di-trans,octa-cis-undecaprenyl phosphate = di-trans,octa-cis-undecaprenyl diphospho-N-acetyl-alpha-D-muramoyl-L-alanyl-D-glutamyl-meso-2,6-diaminopimeloyl-D-alanyl-D-alanine + UMP. The protein operates within cell wall biogenesis; peptidoglycan biosynthesis. Catalyzes the initial step of the lipid cycle reactions in the biosynthesis of the cell wall peptidoglycan: transfers peptidoglycan precursor phospho-MurNAc-pentapeptide from UDP-MurNAc-pentapeptide onto the lipid carrier undecaprenyl phosphate, yielding undecaprenyl-pyrophosphoryl-MurNAc-pentapeptide, known as lipid I. The sequence is that of Phospho-N-acetylmuramoyl-pentapeptide-transferase from Amoebophilus asiaticus (strain 5a2).